The following is a 236-amino-acid chain: 2-C-methyl-D-erythritol 4-phosphate cytidylyltransferase (236 aa).

The protein belongs to the IspD/TarI cytidylyltransferase family. IspD subfamily.

It carries out the reaction 2-C-methyl-D-erythritol 4-phosphate + CTP + H(+) = 4-CDP-2-C-methyl-D-erythritol + diphosphate. It functions in the pathway isoprenoid biosynthesis; isopentenyl diphosphate biosynthesis via DXP pathway; isopentenyl diphosphate from 1-deoxy-D-xylulose 5-phosphate: step 2/6. Functionally, catalyzes the formation of 4-diphosphocytidyl-2-C-methyl-D-erythritol from CTP and 2-C-methyl-D-erythritol 4-phosphate (MEP). The chain is 2-C-methyl-D-erythritol 4-phosphate cytidylyltransferase from Burkholderia cenocepacia (strain ATCC BAA-245 / DSM 16553 / LMG 16656 / NCTC 13227 / J2315 / CF5610) (Burkholderia cepacia (strain J2315)).